Reading from the N-terminus, the 156-residue chain is ATP synthase subunit b 2 (156 aa).

A helical membrane pass occupies residues 7 to 29; sequence LLGQAISFAIFVWFCMKYVWPPV.

This sequence belongs to the ATPase B chain family. As to quaternary structure, F-type ATPases have 2 components, F(1) - the catalytic core - and F(0) - the membrane proton channel. F(1) has five subunits: alpha(3), beta(3), gamma(1), delta(1), epsilon(1). F(0) has three main subunits: a(1), b(2) and c(10-14). The alpha and beta chains form an alternating ring which encloses part of the gamma chain. F(1) is attached to F(0) by a central stalk formed by the gamma and epsilon chains, while a peripheral stalk is formed by the delta and b chains.

It is found in the cell inner membrane. F(1)F(0) ATP synthase produces ATP from ADP in the presence of a proton or sodium gradient. F-type ATPases consist of two structural domains, F(1) containing the extramembraneous catalytic core and F(0) containing the membrane proton channel, linked together by a central stalk and a peripheral stalk. During catalysis, ATP synthesis in the catalytic domain of F(1) is coupled via a rotary mechanism of the central stalk subunits to proton translocation. Its function is as follows. Component of the F(0) channel, it forms part of the peripheral stalk, linking F(1) to F(0). This Marinomonas sp. (strain MWYL1) protein is ATP synthase subunit b 2.